Here is a 55-residue protein sequence, read N- to C-terminus: uncharacterized protein (55 aa).

A run of 2 helical transmembrane segments spans residues 2–19 (VIGL…SFIA) and 24–46 (LLSI…FRYF).

Its subcellular location is the cell membrane. This is an uncharacterized protein from Alkalihalophilus pseudofirmus (strain ATCC BAA-2126 / JCM 17055 / OF4) (Bacillus pseudofirmus).